The sequence spans 2287 residues: Protein Ycf2 (2287 aa).

1641–1648 (GSIGTGRS) serves as a coordination point for ATP.

Belongs to the Ycf2 family.

Its subcellular location is the plastid. The protein localises to the chloroplast stroma. In terms of biological role, probable ATPase of unknown function. Its presence in a non-photosynthetic plant (Epifagus virginiana) and experiments in tobacco indicate that it has an essential function which is probably not related to photosynthesis. The chain is Protein Ycf2 from Lepidium virginicum (Virginia pepperweed).